The primary structure comprises 877 residues: DNA polymerase I (877 aa).

A 5'-3' exonuclease domain is found at 1 to 310; it reads MKKKLVLIDG…FTLADRVTEE (310 aa). Positions 311–465 constitute a 3'-5' exonuclease domain; that stretch reads MLADKAALVV…ALERPFLDEL (155 aa). A polymerase region spans residues 469-877; it reads EQDRLLVELE…HYGSTWYDAK (409 aa).

It belongs to the DNA polymerase type-A family. Single-chain monomer with multiple functions.

It carries out the reaction DNA(n) + a 2'-deoxyribonucleoside 5'-triphosphate = DNA(n+1) + diphosphate. Its function is as follows. In addition to polymerase activity, this DNA polymerase exhibits 3'-5' and 5'-3' exonuclease activity. The chain is DNA polymerase I (polA) from Bacillus caldotenax.